A 139-amino-acid chain; its full sequence is Probable disulfide formation protein C 1 (139 aa).

A helical transmembrane segment spans residues glutamate 8 to tyrosine 27. An intrachain disulfide couples cysteine 37 to cysteine 40. 2 consecutive transmembrane segments (helical) span residues tyrosine 42–lysine 61 and tyrosine 68–valine 85. An intrachain disulfide couples cysteine 99 to cysteine 104. A helical transmembrane segment spans residues glycine 113–valine 135.

Belongs to the DsbB family. BdbC subfamily.

Its subcellular location is the cell membrane. Functionally, required for disulfide bond formation in some proteins. This is Probable disulfide formation protein C 1 (bdbC1) from Bacillus anthracis.